We begin with the raw amino-acid sequence, 211 residues long: Regulator of G-protein signaling 2 (211 aa).

The tract at residues 32–66 (KMKRTLLKDWKTRLSYFLQNSSAPGKPKTGKKSKQ) is necessary for membrane association. The necessary to inhibit protein synthesis stretch occupies residues 79–116 (LWAEAFDELLASKYGLAAFRAFLKSEFCEENIEFWLAC). The 117-residue stretch at 83–199 (AFDELLASKY…LESEFYQDLC (117 aa)) folds into the RGS domain.

In terms of assembly, interacts with GNAQ. Does not interact with GNAI1 and GNAI3. Interacts with EIF2B5. Interacts with PRKG1 (isoform alpha). In terms of processing, phosphorylated by protein kinase C. Phosphorylation by PRKG1 leads to activation of RGS2 activity. In terms of tissue distribution, expressed in a wide variety of tissues.

The protein localises to the cell membrane. Its subcellular location is the cytoplasm. It is found in the nucleus. It localises to the nucleolus. In terms of biological role, regulates G protein-coupled receptor signaling cascades. Inhibits signal transduction by increasing the GTPase activity of G protein alpha subunits, thereby driving them into their inactive GDP-bound form. It is involved in the negative regulation of the angiotensin-activated signaling pathway. Plays a role in the regulation of blood pressure in response to signaling via G protein-coupled receptors and GNAQ. Plays a role in regulating the constriction and relaxation of vascular smooth muscle. Binds EIF2B5 and blocks its activity, thereby inhibiting the translation of mRNA into protein. The protein is Regulator of G-protein signaling 2 (Rgs2) of Mus musculus (Mouse).